The sequence spans 88 residues: UPF0250 protein Sbal_3280 (88 aa).

This sequence belongs to the UPF0250 family.

The sequence is that of UPF0250 protein Sbal_3280 from Shewanella baltica (strain OS155 / ATCC BAA-1091).